The following is a 488-amino-acid chain: Microtubule-destabilizing protein 60 (488 aa).

Over residues 25-56 (AQEVSRFSENSNPNFVSHSTPLEKSSKSSAQK) the composition is skewed to polar residues. Disordered stretches follow at residues 25–71 (AQEV…VFSP), 262–304 (HASV…TKKQ), and 436–457 (DRPFIPKRSNKHPTVPRDPKFN). A compositionally biased stretch (low complexity) spans 264-280 (SVSSSWDNSVSSLNSNG).

The protein belongs to the TPX2 family.

It is found in the cytoplasm. It localises to the cytoskeleton. Binds directly to microtubules. Microtubule-destabilizing protein involved in the PIF3-dependent positive regulation of hypocotyl cell elongation via the modulation of cortical microtubules dynamic in response to light and ethylene signaling. Promotes submergence-induced and ethylene-dependent underwater hypocotyl elongation. This chain is Microtubule-destabilizing protein 60, found in Arabidopsis thaliana (Mouse-ear cress).